Here is a 220-residue protein sequence, read N- to C-terminus: Urease accessory protein UreF (220 aa).

This sequence belongs to the UreF family. UreD, UreF and UreG form a complex that acts as a GTP-hydrolysis-dependent molecular chaperone, activating the urease apoprotein by helping to assemble the nickel containing metallocenter of UreC. The UreE protein probably delivers the nickel.

The protein resides in the cytoplasm. In terms of biological role, required for maturation of urease via the functional incorporation of the urease nickel metallocenter. The polypeptide is Urease accessory protein UreF (Bordetella parapertussis (strain 12822 / ATCC BAA-587 / NCTC 13253)).